The sequence spans 137 residues: Probable DNA-directed RNA polymerases I, II, and III subunit RPABC2 (137 aa).

Acidic residues-rich tracts occupy residues 1-27 (MADE…VIEE) and 34-43 (NEDEDDDNVD). The interval 1–43 (MADEDDYQDMDNDDFVDDNEMEDVIEEDPQRPDNEDEDDDNVD) is disordered.

It belongs to the archaeal Rpo6/eukaryotic RPB6 RNA polymerase subunit family. Component of the RNA polymerase I (Pol I), RNA polymerase II (Pol II) and RNA polymerase III (Pol III) complexes consisting of at least 13, 12 and 17 subunits, respectively.

Its subcellular location is the nucleus. Functionally, DNA-dependent RNA polymerases catalyze the transcription of DNA into RNA using the four ribonucleoside triphosphates as substrates. Common component of RNA polymerases I, II and III which synthesize ribosomal RNA precursors, mRNA precursors and many functional non-coding RNAs, and small RNAs, such as 5S rRNA and tRNAs, respectively. Pol II is the central component of the basal RNA polymerase II transcription machinery. Pols are composed of mobile elements that move relative to each other. In Pol II, RPB6 is part of the clamp element and together with parts of RPB1 and RPB2 forms a pocket to which the RPB4-RPB7 subcomplex binds. This chain is Probable DNA-directed RNA polymerases I, II, and III subunit RPABC2 (rpb-6), found in Caenorhabditis elegans.